The following is a 173-amino-acid chain: Methylated-DNA--protein-cysteine methyltransferase (173 aa).

C143 acts as the Nucleophile; methyl group acceptor in catalysis.

This sequence belongs to the MGMT family.

Its subcellular location is the cytoplasm. It carries out the reaction a 6-O-methyl-2'-deoxyguanosine in DNA + L-cysteinyl-[protein] = S-methyl-L-cysteinyl-[protein] + a 2'-deoxyguanosine in DNA. It catalyses the reaction a 4-O-methyl-thymidine in DNA + L-cysteinyl-[protein] = a thymidine in DNA + S-methyl-L-cysteinyl-[protein]. Involved in the cellular defense against the biological effects of O6-methylguanine (O6-MeG) and O4-methylthymine (O4-MeT) in DNA. Repairs the methylated nucleobase in DNA by stoichiometrically transferring the methyl group to a cysteine residue in the enzyme. This is a suicide reaction: the enzyme is irreversibly inactivated. The chain is Methylated-DNA--protein-cysteine methyltransferase from Pyrococcus sp. (strain NA2).